The primary structure comprises 293 residues: 4-hydroxy-3-methylbut-2-enyl diphosphate reductase (293 aa).

C12 contributes to the [4Fe-4S] cluster binding site. 2 residues coordinate (2E)-4-hydroxy-3-methylbut-2-enyl diphosphate: H40 and H74. Dimethylallyl diphosphate contacts are provided by H40 and H74. Residues H40 and H74 each coordinate isopentenyl diphosphate. C96 provides a ligand contact to [4Fe-4S] cluster. A (2E)-4-hydroxy-3-methylbut-2-enyl diphosphate-binding site is contributed by H128. H128 is a dimethylallyl diphosphate binding site. H128 contacts isopentenyl diphosphate. E130 functions as the Proton donor in the catalytic mechanism. T166 is a binding site for (2E)-4-hydroxy-3-methylbut-2-enyl diphosphate. C202 lines the [4Fe-4S] cluster pocket. S230, S231, N232, and S274 together coordinate (2E)-4-hydroxy-3-methylbut-2-enyl diphosphate. S230, S231, N232, and S274 together coordinate dimethylallyl diphosphate. 4 residues coordinate isopentenyl diphosphate: S230, S231, N232, and S274.

It belongs to the IspH family. [4Fe-4S] cluster is required as a cofactor.

The enzyme catalyses isopentenyl diphosphate + 2 oxidized [2Fe-2S]-[ferredoxin] + H2O = (2E)-4-hydroxy-3-methylbut-2-enyl diphosphate + 2 reduced [2Fe-2S]-[ferredoxin] + 2 H(+). It carries out the reaction dimethylallyl diphosphate + 2 oxidized [2Fe-2S]-[ferredoxin] + H2O = (2E)-4-hydroxy-3-methylbut-2-enyl diphosphate + 2 reduced [2Fe-2S]-[ferredoxin] + 2 H(+). Its pathway is isoprenoid biosynthesis; dimethylallyl diphosphate biosynthesis; dimethylallyl diphosphate from (2E)-4-hydroxy-3-methylbutenyl diphosphate: step 1/1. It functions in the pathway isoprenoid biosynthesis; isopentenyl diphosphate biosynthesis via DXP pathway; isopentenyl diphosphate from 1-deoxy-D-xylulose 5-phosphate: step 6/6. In terms of biological role, catalyzes the conversion of 1-hydroxy-2-methyl-2-(E)-butenyl 4-diphosphate (HMBPP) into a mixture of isopentenyl diphosphate (IPP) and dimethylallyl diphosphate (DMAPP). Acts in the terminal step of the DOXP/MEP pathway for isoprenoid precursor biosynthesis. In Cytophaga hutchinsonii (strain ATCC 33406 / DSM 1761 / CIP 103989 / NBRC 15051 / NCIMB 9469 / D465), this protein is 4-hydroxy-3-methylbut-2-enyl diphosphate reductase.